An 829-amino-acid chain; its full sequence is Dipeptidyl peptidase family member 2 (829 aa).

Over 1–27 the chain is Cytoplasmic; sequence MENDNYDVEEQGCSVFNGKHGYFARSC. The chain crosses the membrane as a helical; Signal-anchor for type II membrane protein span at residues 28 to 48; it reads CVVFILIICVIFVFSVIFTFM. The Extracellular segment spans residues 49 to 829; sequence QNPINLNSDN…DCFKSNLDLL (781 aa). 6 N-linked (GlcNAc...) asparagine glycosylation sites follow: Asn-61, Asn-66, Asn-183, Asn-209, Asn-314, and Asn-359. Cys-514 and Cys-533 are oxidised to a cystine. Catalysis depends on Ser-691, which acts as the Charge relay system. Cys-711 and Cys-821 are joined by a disulfide. An N-linked (GlcNAc...) asparagine glycan is attached at Asn-754. Residues Asp-768 and His-800 each act as charge relay system in the active site.

This sequence belongs to the peptidase S9B family. DPPIV subfamily.

Its subcellular location is the cell membrane. Its function is as follows. Removes N-terminal dipeptides sequentially from polypeptides. Essential for control of distal tip cell migration. The polypeptide is Dipeptidyl peptidase family member 2 (dpf-2) (Caenorhabditis elegans).